The following is a 608-amino-acid chain: MPRIHVLPPGLVNQIAAGEVVERPASIVKELVENALDAGATAIGVDVEEGGLALVRVADDGSGMDRDDALLALERHATSKLRDAEGLAAIGTMGFRGEAVPAIASVSRFRLDTSPGEDGAGTRVEIEGGVLGEVAPVARPRGTTVEVRDLFFNTPARRKFMRAASTEAGHVSEAVIRLALARPDVGFTLRSGGRLVLGARAGGGLADRAGQALGREAHRHLLPVDARRGEVRVHGLICSPDHSEATGRALYLFVNGRYVRDRAAAHAVLRAFAGTLPPGRHPAGVLFVELPLDRVDVNVHPQKLEVRFAEGREVFDALFHTVAGALRTAPWLRARPQAAPAGEGPPAGGEAVAVPLAGEDAAAVLAWARAARPPEGSGATLVQPAPGAWATGRLAFPIAPAPDAGPEAAPRPEGYFAGLRYVGQHARTYLLCEAPGGTLVVIDQHASHERMLFHRLKEAFRARRIPVQPYLLPQVVTLPPAAARALEAGLAELGRLGFDAEPFGGDAFAVKGAPAALAGVDLTALLTDLGSQLADVERGSAVDDAFHDLLATMACHAAVRANQDVSPEEARALLDGLDAIDFKARCPHGRPVVFELSLADLERRVGRR.

Belongs to the DNA mismatch repair MutL/HexB family.

Functionally, this protein is involved in the repair of mismatches in DNA. It is required for dam-dependent methyl-directed DNA mismatch repair. May act as a 'molecular matchmaker', a protein that promotes the formation of a stable complex between two or more DNA-binding proteins in an ATP-dependent manner without itself being part of a final effector complex. This Anaeromyxobacter dehalogenans (strain 2CP-C) protein is DNA mismatch repair protein MutL.